Reading from the N-terminus, the 786-residue chain is Endonuclease MutS2 (786 aa).

An ATP-binding site is contributed by 332 to 339 (GPNTGGKT). Positions 711 to 786 (IDLRGMDSME…GTGVTVVELK (76 aa)) constitute a Smr domain.

The protein belongs to the DNA mismatch repair MutS family. MutS2 subfamily. Homodimer. Binds to stalled ribosomes, contacting rRNA.

Endonuclease that is involved in the suppression of homologous recombination and thus may have a key role in the control of bacterial genetic diversity. Its function is as follows. Acts as a ribosome collision sensor, splitting the ribosome into its 2 subunits. Detects stalled/collided 70S ribosomes which it binds and splits by an ATP-hydrolysis driven conformational change. Acts upstream of the ribosome quality control system (RQC), a ribosome-associated complex that mediates the extraction of incompletely synthesized nascent chains from stalled ribosomes and their subsequent degradation. Probably generates substrates for RQC. The protein is Endonuclease MutS2 of Clostridium tetani (strain Massachusetts / E88).